Reading from the N-terminus, the 266-residue chain is Putative carbamate hydrolase RutD (266 aa).

This sequence belongs to the AB hydrolase superfamily. Hydrolase RutD family.

The enzyme catalyses carbamate + 2 H(+) = NH4(+) + CO2. Involved in pyrimidine catabolism. May facilitate the hydrolysis of carbamate, a reaction that can also occur spontaneously. This chain is Putative carbamate hydrolase RutD, found in Escherichia coli O7:K1 (strain IAI39 / ExPEC).